A 187-amino-acid polypeptide reads, in one-letter code: Elongation factor P (187 aa).

This sequence belongs to the elongation factor P family.

The protein resides in the cytoplasm. Its pathway is protein biosynthesis; polypeptide chain elongation. In terms of biological role, involved in peptide bond synthesis. Stimulates efficient translation and peptide-bond synthesis on native or reconstituted 70S ribosomes in vitro. Probably functions indirectly by altering the affinity of the ribosome for aminoacyl-tRNA, thus increasing their reactivity as acceptors for peptidyl transferase. The polypeptide is Elongation factor P (Acidothermus cellulolyticus (strain ATCC 43068 / DSM 8971 / 11B)).